A 552-amino-acid polypeptide reads, in one-letter code: Probable bifunctional methylthioribose-1-phosphate isomerase/methylthioribulose-1-phosphate dehydratase (552 aa).

The segment at 1-333 is methylthioribose-1-phosphate isomerase activity; the sequence is MRPIDDSSLT…VVTEHGVVHG (333 aa). Residues 49–51, Arg-91, and Gln-195 each bind substrate; that span reads RGA. Asp-236 (proton donor) is an active-site residue. 246-247 contacts substrate; that stretch reads NK. The tract at residues 334 to 535 is methylthioribulose-1-phosphate dehydratase activity; the sequence is TVAAEPGARI…AVCELVLRTG (202 aa). Residues His-427 and His-429 each coordinate Zn(2+).

The protein in the N-terminal section; belongs to the eIF-2B alpha/beta/delta subunits family. MtnA subfamily. This sequence in the C-terminal section; belongs to the aldolase class II family. MtnB subfamily. Zn(2+) serves as cofactor.

The enzyme catalyses 5-(methylsulfanyl)-alpha-D-ribose 1-phosphate = 5-(methylsulfanyl)-D-ribulose 1-phosphate. It carries out the reaction 5-(methylsulfanyl)-D-ribulose 1-phosphate = 5-methylsulfanyl-2,3-dioxopentyl phosphate + H2O. It participates in amino-acid biosynthesis; L-methionine biosynthesis via salvage pathway; L-methionine from S-methyl-5-thio-alpha-D-ribose 1-phosphate: step 1/6. It functions in the pathway amino-acid biosynthesis; L-methionine biosynthesis via salvage pathway; L-methionine from S-methyl-5-thio-alpha-D-ribose 1-phosphate: step 2/6. In terms of biological role, bifunctional protein that catalyzes the interconversion of methylthioribose-1-phosphate (MTR-1-P) into methylthioribulose-1-phosphate (MTRu-1-P), and the dehydration of methylthioribulose-1-phosphate (MTRu-1-P) into 2,3-diketo-5-methylthiopentyl-1-phosphate (DK-MTP-1-P). This Nocardia farcinica (strain IFM 10152) protein is Probable bifunctional methylthioribose-1-phosphate isomerase/methylthioribulose-1-phosphate dehydratase (mtnAB).